The following is a 712-amino-acid chain: Prion-like (glutamine/asparagine-rich) domain bearing protein pqn-59 (712 aa).

2 stretches are compositionally biased toward basic and acidic residues: residues E79–E92 and R125–A141. Disordered regions lie at residues E79–A172, T198–A217, A228–P265, S410–P517, F594–Y624, and A659–N712. The segment covering G156–G165 has biased composition (gly residues). Residues A241–S255 are compositionally biased toward low complexity. Positions L431–P458 are enriched in polar residues. Residues P474–T510 show a composition bias toward low complexity. Composition is skewed to polar residues over residues F597–N612 and A683–G696.

This sequence belongs to the Ubiquitin-associated-like family.

The protein localises to the cytoplasm. Its subcellular location is the stress granule. In terms of biological role, antagonises the activities of multiple heterochronic microRNAs such as lin-4 and let-7 miRNAs. Modulates gene expression and cell fate specification during development. Plays a role in, but not strictly required for, the formation of stress granules. May be involved in protein translation and reducing the expression of mature microRNAs. The sequence is that of Prion-like (glutamine/asparagine-rich) domain bearing protein pqn-59 from Caenorhabditis elegans.